We begin with the raw amino-acid sequence, 301 residues long: Heat shock factor protein HSF24 (301 aa).

The DNA-binding element occupies 7–101 (PAPFLLKTYQ…LLTAIRRRKT (95 aa)). Disordered regions lie at residues 103–160 (TSTP…DENE) and 221–244 (GVKD…DEKG). Positions 107-142 (AGGKSVAAGASASPDNSGDDIGSSSTSSPDSKNPGS) are enriched in low complexity. The segment covering 233–243 (DNDDKEDDDEK) has biased composition (acidic residues).

This sequence belongs to the HSF family. Homotrimer. In terms of processing, exhibits temperature-dependent phosphorylation.

It localises to the nucleus. Its function is as follows. DNA-binding protein that specifically binds heat shock promoter elements (HSE) and activates transcription. This chain is Heat shock factor protein HSF24 (HSF24), found in Solanum peruvianum (Peruvian tomato).